The chain runs to 157 residues: Transcriptional repressor NrdR (157 aa).

Residues 3 to 34 (CSNCQNKNTKVLDSRPIEEGRAIRRRRECERC) fold into a zinc finger. The ATP-cone domain maps to 49–139 (LIVVKKDGVR…VYRQFKDITV (91 aa)).

It belongs to the NrdR family. The cofactor is Zn(2+).

Its function is as follows. Negatively regulates transcription of bacterial ribonucleotide reductase nrd genes and operons by binding to NrdR-boxes. The sequence is that of Transcriptional repressor NrdR from Oceanobacillus iheyensis (strain DSM 14371 / CIP 107618 / JCM 11309 / KCTC 3954 / HTE831).